Reading from the N-terminus, the 473-residue chain is Argininosuccinate lyase (473 aa).

It belongs to the lyase 1 family. Argininosuccinate lyase subfamily.

It localises to the cytoplasm. The enzyme catalyses 2-(N(omega)-L-arginino)succinate = fumarate + L-arginine. The protein operates within amino-acid biosynthesis; L-arginine biosynthesis; L-arginine from L-ornithine and carbamoyl phosphate: step 3/3. The sequence is that of Argininosuccinate lyase from Streptomyces clavuligerus.